The sequence spans 488 residues: Proline--tRNA ligase (488 aa).

The protein belongs to the class-II aminoacyl-tRNA synthetase family. ProS type 3 subfamily. As to quaternary structure, homodimer.

Its subcellular location is the cytoplasm. It carries out the reaction tRNA(Pro) + L-proline + ATP = L-prolyl-tRNA(Pro) + AMP + diphosphate. Functionally, catalyzes the attachment of proline to tRNA(Pro) in a two-step reaction: proline is first activated by ATP to form Pro-AMP and then transferred to the acceptor end of tRNA(Pro). The sequence is that of Proline--tRNA ligase from Symbiobacterium thermophilum (strain DSM 24528 / JCM 14929 / IAM 14863 / T).